Here is a 166-residue protein sequence, read N- to C-terminus: Large ribosomal subunit protein bL9 (166 aa).

This sequence belongs to the bacterial ribosomal protein bL9 family.

In terms of biological role, binds to the 23S rRNA. This chain is Large ribosomal subunit protein bL9, found in Borrelia garinii subsp. bavariensis (strain ATCC BAA-2496 / DSM 23469 / PBi) (Borreliella bavariensis).